Here is a 603-residue protein sequence, read N- to C-terminus: Deuterosome assembly protein 1 (603 aa).

Coiled coils occupy residues 14–59 (CEAE…NAQT), 85–197 (MTQN…GKKQ), 227–278 (IEKL…ELQS), 336–399 (QDQP…KQLK), and 454–480 (HTSI…NGKS). Ser-546 is modified (phosphoserine). A coiled-coil region spans residues 557-600 (AAQHFLLEEEKRAKELEKLLNTHIDELQRHTEFTLNKYSKLKQN).

Belongs to the CEP63 family. As to quaternary structure, interacts with CEP152; the interaction is mutually exclusive with CEP63.

Its subcellular location is the cytoplasm. In terms of biological role, key structural component of the deuterosome, a structure that promotes de novo centriole amplification in multiciliated cells. Deuterosome-mediated centriole amplification occurs in terminally differentiated multiciliated cells and can generate more than 100 centrioles. Probably sufficient for the specification and formation of the deuterosome inner core. Interacts with CEP152 and recruits PLK4 to activate centriole biogenesis. In Macaca fascicularis (Crab-eating macaque), this protein is Deuterosome assembly protein 1.